The chain runs to 22 residues: Peptide PGLa-BM3 (22 aa).

The residue at position 22 (L22) is a Leucine amide.

In terms of tissue distribution, expressed by the skin glands.

It is found in the secreted. Functionally, antimicrobial peptide. In Xenopus boumbaensis (Mawa clawed frog), this protein is Peptide PGLa-BM3.